A 372-amino-acid chain; its full sequence is MHSQAPIQRRKSTRIYVGNVPIGDGAPIAVQSMTNTRTTDVEATVNQIKALERVGADIVRVSVPTMDAAEAFKLIKQRVNVPLVADIHFDYRIALKVAEYGVDCLRINPGNIGNEERIRMVVDCARDKNIPIRIGVNAGSLEKDLQEKYGEPTPQALLESAMRHVDHLDRLNFDQFKVSVKASDVFLAVESYRLLAKQIDQPLHLGITEAGGARSGAVKSAIGLGLLLSEGIGDTLRVSLAADPVEEIKVGFDILKSLRIRSRGINFIACPTCSRQEFDVIGTVNALEQRLEDIITPMDVSIIGCVVNGPGEALVSTLGVTGGNKKSGLYEDGVRKDRLDNNDMIDQLEARIRAKASQLDEARRIDVQQVEK.

[4Fe-4S] cluster contacts are provided by C270, C273, C305, and E312.

Belongs to the IspG family. [4Fe-4S] cluster is required as a cofactor.

The catalysed reaction is (2E)-4-hydroxy-3-methylbut-2-enyl diphosphate + oxidized [flavodoxin] + H2O + 2 H(+) = 2-C-methyl-D-erythritol 2,4-cyclic diphosphate + reduced [flavodoxin]. The protein operates within isoprenoid biosynthesis; isopentenyl diphosphate biosynthesis via DXP pathway; isopentenyl diphosphate from 1-deoxy-D-xylulose 5-phosphate: step 5/6. Functionally, converts 2C-methyl-D-erythritol 2,4-cyclodiphosphate (ME-2,4cPP) into 1-hydroxy-2-methyl-2-(E)-butenyl 4-diphosphate. In Shigella dysenteriae serotype 1 (strain Sd197), this protein is 4-hydroxy-3-methylbut-2-en-1-yl diphosphate synthase (flavodoxin).